Reading from the N-terminus, the 35-residue chain is Cupiennin-2e (35 aa).

Glutamic acid 1-amide is present on Glu35.

As to expression, expressed by the venom gland.

Its subcellular location is the secreted. In Cupiennius salei (American wandering spider), this protein is Cupiennin-2e.